The following is a 216-amino-acid chain: Glycerol-3-phosphate acyltransferase 3 (216 aa).

Helical transmembrane passes span 6-26 (LLLV…YLVS), 58-78 (LVAS…GLVI), 92-112 (LLFA…WPVF), 125-145 (FGGM…VLII), and 158-178 (ITGV…SGFP).

This sequence belongs to the PlsY family. As to quaternary structure, probably interacts with PlsX.

Its subcellular location is the cell membrane. It catalyses the reaction an acyl phosphate + sn-glycerol 3-phosphate = a 1-acyl-sn-glycero-3-phosphate + phosphate. Its pathway is lipid metabolism; phospholipid metabolism. Functionally, catalyzes the transfer of an acyl group from acyl-phosphate (acyl-PO(4)) to glycerol-3-phosphate (G3P) to form lysophosphatidic acid (LPA). This enzyme utilizes acyl-phosphate as fatty acyl donor, but not acyl-CoA or acyl-ACP. This chain is Glycerol-3-phosphate acyltransferase 3, found in Dehalococcoides mccartyi (strain CBDB1).